A 618-amino-acid polypeptide reads, in one-letter code: Glutathione-regulated potassium-efflux system protein (618 aa).

The next 12 helical transmembrane spans lie at 6–26 (NPELMKVVILLASSVTIVPLF), 32–52 (GSVLGYLVAGCLIGPSVFGIV), 55–75 (PTAVVHLAELGVVMFLFIIGL), 94–114 (LLQVGLCGCLLTFSGIYLLGL), 118–138 (VSFIAGMGFTLSSTAIVMQSL), 152–172 (VISTLIFEDIAIVPLLASVAF), 186–206 (WVSIGIALSAVVGLIVTGKWL), 227–247 (ALLVVLGAALAMEIGGLSMAM), 274–294 (GLLLGLFFMGVGMSLDLHLVF), 298–318 (ILLLGIVFLYILGKASAVYII), 336–356 (MAHGGEFAFVLFSAAATAEVI), and 362–382 (ATFTAAVIISMLFSPIIAQIA). In terms of domain architecture, RCK N-terminal spans 409–525 (EDNVLVIGFG…LIKQDVDFIV (117 aa)).

The protein belongs to the monovalent cation:proton antiporter 2 (CPA2) transporter (TC 2.A.37) family.

It localises to the cell inner membrane. Transport system that facilitate potassium-efflux, possibly by potassium-proton antiport. The polypeptide is Glutathione-regulated potassium-efflux system protein (kefBC) (Haemophilus influenzae (strain ATCC 51907 / DSM 11121 / KW20 / Rd)).